Here is a 352-residue protein sequence, read N- to C-terminus: Peptide chain release factor 1 (352 aa).

Q229 carries the N5-methylglutamine modification.

Belongs to the prokaryotic/mitochondrial release factor family. Methylated by PrmC. Methylation increases the termination efficiency of RF1.

The protein localises to the cytoplasm. Its function is as follows. Peptide chain release factor 1 directs the termination of translation in response to the peptide chain termination codons UAG and UAA. This Gluconacetobacter diazotrophicus (strain ATCC 49037 / DSM 5601 / CCUG 37298 / CIP 103539 / LMG 7603 / PAl5) protein is Peptide chain release factor 1.